The sequence spans 541 residues: Chaperonin GroEL 2 (541 aa).

ATP is bound by residues 29–32, 86–90, Gly-413, 476–478, and Asp-492; these read TLGP, DGTTT, and NAA.

Belongs to the chaperonin (HSP60) family. In terms of assembly, forms a cylinder of 14 subunits composed of two heptameric rings stacked back-to-back. Interacts with the co-chaperonin GroES.

The protein localises to the secreted. The protein resides in the capsule. It is found in the cell surface. It localises to the cell wall. The catalysed reaction is ATP + H2O + a folded polypeptide = ADP + phosphate + an unfolded polypeptide.. Its function is as follows. Together with its co-chaperonin GroES, plays an essential role in assisting protein folding. The GroEL-GroES system forms a nano-cage that allows encapsulation of the non-native substrate proteins and provides a physical environment optimized to promote and accelerate protein folding. This Mycolicibacterium vanbaalenii (strain DSM 7251 / JCM 13017 / BCRC 16820 / KCTC 9966 / NRRL B-24157 / PYR-1) (Mycobacterium vanbaalenii) protein is Chaperonin GroEL 2.